Here is a 137-residue protein sequence, read N- to C-terminus: Small ribosomal subunit protein uS12 (137 aa).

The disordered stretch occupies residues 1 to 55; the sequence is MPTINQLVRKPRQSKIKKSDSPALNKGFNSKKKKFTDLNSPQKRGVCTRVGTMTP. Aspartate 102 carries the 3-methylthioaspartic acid modification. A disordered region spans residues 118–137; it reads SGVDGRRQGRSLYGTKKPKN.

This sequence belongs to the universal ribosomal protein uS12 family. As to quaternary structure, part of the 30S ribosomal subunit. Contacts proteins S8 and S17. May interact with IF1 in the 30S initiation complex.

With S4 and S5 plays an important role in translational accuracy. Functionally, interacts with and stabilizes bases of the 16S rRNA that are involved in tRNA selection in the A site and with the mRNA backbone. Located at the interface of the 30S and 50S subunits, it traverses the body of the 30S subunit contacting proteins on the other side and probably holding the rRNA structure together. The combined cluster of proteins S8, S12 and S17 appears to hold together the shoulder and platform of the 30S subunit. In Staphylococcus aureus (strain Mu3 / ATCC 700698), this protein is Small ribosomal subunit protein uS12.